We begin with the raw amino-acid sequence, 378 residues long: Phosphoglycerate kinase (378 aa).

(2R)-3-phosphoglycerate-binding residues include Val-1, Asp-2, Phe-3, Asn-4, Asn-16, Arg-17, Ser-40, His-41, Gly-43, Arg-44, Leu-99, Arg-100, His-147, and Arg-148. Gly-191 contributes to the ADP binding site. Gly-191 serves as a coordination point for CDP. Positions 192 and 193 each coordinate AMP. ATP is bound at residue Ala-192. Residue Ala-192 participates in Mg(2+) binding. Asp-196 is a binding site for CDP. Asp-196 lines the Mg(2+) pocket. Position 197 (Lys-197) interacts with AMP. Lys-197 serves as a coordination point for ATP. Gly-215 serves as a coordination point for ADP. Position 215 (Gly-215) interacts with CDP. The AMP site is built by Gly-216 and Gly-288. Residues Gly-216 and Gly-288 each contribute to the ATP site. 2 residues coordinate CDP: Gly-313 and Phe-318. Phe-318 serves as a coordination point for ADP. Glu-319 contacts AMP. ATP-binding residues include Glu-319, Asp-351, and Thr-352. Residue Asp-351 participates in Mg(2+) binding.

It belongs to the phosphoglycerate kinase family. In terms of assembly, monomer. Requires Mg(2+) as cofactor.

It catalyses the reaction (2R)-3-phosphoglycerate + ATP = (2R)-3-phospho-glyceroyl phosphate + ADP. The protein operates within carbohydrate degradation; glycolysis; pyruvate from D-glyceraldehyde 3-phosphate: step 2/5. This chain is Phosphoglycerate kinase (PGK), found in Condylostoma magnum.